Here is a 179-residue protein sequence, read N- to C-terminus: Large ribosomal subunit protein uL6 (179 aa).

It belongs to the universal ribosomal protein uL6 family. Part of the 50S ribosomal subunit.

Its function is as follows. This protein binds to the 23S rRNA, and is important in its secondary structure. It is located near the subunit interface in the base of the L7/L12 stalk, and near the tRNA binding site of the peptidyltransferase center. This chain is Large ribosomal subunit protein uL6, found in Methylacidiphilum infernorum (isolate V4) (Methylokorus infernorum (strain V4)).